The sequence spans 205 residues: MPVVFVAASKLPTPFAIFTMHGFLDEATGREHVVLSLGDIADGEPVLGRLHSECLTGDALFSQRCDCGSQLEAALQAIAREGRGVLLYLRQEGRGIGLLNKIRAYELQDGGADTVEANERLGFAADQRDYAMCLPMLEHLGVKSLRLMTNNPRKVKALTDMSIKVAERVPLHTGHNPHNRLYLATKADKLGHMMGNKHQGEVPQA.

GTP is bound at residue 49-53 (RLHSE). 3 residues coordinate Zn(2+): cysteine 54, cysteine 65, and cysteine 67. GTP-binding positions include glutamine 70, 92–94 (EGR), and threonine 114. Catalysis depends on aspartate 126, which acts as the Proton acceptor. The active-site Nucleophile is arginine 128. GTP-binding residues include threonine 149 and lysine 154.

This sequence belongs to the GTP cyclohydrolase II family. Zn(2+) serves as cofactor.

The enzyme catalyses GTP + 4 H2O = 2,5-diamino-6-hydroxy-4-(5-phosphoribosylamino)-pyrimidine + formate + 2 phosphate + 3 H(+). It functions in the pathway cofactor biosynthesis; riboflavin biosynthesis; 5-amino-6-(D-ribitylamino)uracil from GTP: step 1/4. Catalyzes the conversion of GTP to 2,5-diamino-6-ribosylamino-4(3H)-pyrimidinone 5'-phosphate (DARP), formate and pyrophosphate. The sequence is that of GTP cyclohydrolase-2 from Pseudomonas entomophila (strain L48).